Reading from the N-terminus, the 735-residue chain is Protein STRUBBELIG-RECEPTOR FAMILY 2 (735 aa).

The first 23 residues, 1-23, serve as a signal peptide directing secretion; that stretch reads MKTKQQLRFLATILLTTILFVLA. Topologically, residues 24 to 297 are extracellular; the sequence is KTDTDPLEVL…KKKKKGIGAG (274 aa). LRR repeat units follow at residues 78-94, 96-119, 120-140, 142-163, 165-187, 189-211, 212-232, and 233-253; these read LREL…LQHL, NLKI…PPNA, THIN…LPLM, SLQS…VFSG, QIKE…FGTL, NLTS…ADLP, LADL…HFQS, and IPHL…KPWK. N-linked (GlcNAc...) asparagine glycans are attached at residues Asn-118, Asn-128, Asn-147, Asn-175, and Asn-189. A glycan (N-linked (GlcNAc...) asparagine) is linked at Asn-264. A helical transmembrane segment spans residues 298–318; the sequence is STFLLVGGLALLGTFFALFAV. The Cytoplasmic segment spans residues 319 to 735; sequence RMNHRRAQNL…SSPTFSYLSS (417 aa). The interval 358–378 is disordered; it reads PQIKRFQPPPAPQLRHLPSPP. A Protein kinase domain is found at 415 to 695; the sequence is FSEENLLGEG…EIVEALTALI (281 aa).

It belongs to the protein kinase superfamily. Ser/Thr protein kinase family. Expressed in seedlings, roots, stems, leaves, flowers and siliques.

It localises to the membrane. The chain is Protein STRUBBELIG-RECEPTOR FAMILY 2 (SRF2) from Arabidopsis thaliana (Mouse-ear cress).